Consider the following 393-residue polypeptide: MLVLGSLRSALSCSSTASLISKRNPCYPYGILCRTLSQSVKLWQENTSKDDSSLNITPRLLKIIPNDTDIVTLEKQDELIKRRRKLSKEVTQMKRLKPVSPGLRWYRSPIYPYLYKGRPVRALTVVRKKHGGRNNSGKITVRHQGGGHRNRTRLIDFNRWEGGAQTVQRIEYDPGRSSHIALLKHNTTGELSYIIACDGLRPGDVVESFRRGIPQTLLNEMGGKVDPAILSVKTTQRGNCLPISMIPIGTIIHNVGITPVGPGKFCRSAGTYARVLAKLPEKKKAIVRLQSGEHRYVSLEAVATIGVVSNIDHQNRSLGKAGRSRWLGIRPTVRGVAMNKCDHPHGGGRGKSKSNKLSMSPWGQLAKGYKTRRGKNQNRMKVKDRPRGKDARL.

A mitochondrion-targeting transit peptide spans 1–43 (MLVLGSLRSALSCSSTASLISKRNPCYPYGILCRTLSQSVKLW). The tract at residues 337–393 (AMNKCDHPHGGGRGKSKSNKLSMSPWGQLAKGYKTRRGKNQNRMKVKDRPRGKDARL) is disordered. The span at 369–380 (YKTRRGKNQNRM) shows a compositional bias: basic residues. A compositionally biased stretch (basic and acidic residues) spans 381 to 393 (KVKDRPRGKDARL).

It belongs to the universal ribosomal protein uL2 family. In terms of assembly, component of the mitochondrial large ribosomal subunit (mt-LSU). Mature yeast 74S mitochondrial ribosomes consist of a small (37S) and a large (54S) subunit. The 37S small subunit contains a 15S ribosomal RNA (15S mt-rRNA) and 34 different proteins. The 54S large subunit contains a 21S rRNA (21S mt-rRNA) and 46 different proteins. uL2m has a Na/K ligand binding site.

It localises to the mitochondrion. Functionally, component of the mitochondrial ribosome (mitoribosome), a dedicated translation machinery responsible for the synthesis of mitochondrial genome-encoded proteins, including at least some of the essential transmembrane subunits of the mitochondrial respiratory chain. The mitoribosomes are attached to the mitochondrial inner membrane and translation products are cotranslationally integrated into the membrane. In Saccharomyces cerevisiae (strain ATCC 204508 / S288c) (Baker's yeast), this protein is Large ribosomal subunit protein uL2m (RML2).